The following is a 535-amino-acid chain: Calcium-dependent protein kinase 1 (535 aa).

Residues methionine 1–aspartate 34 form a disordered region. Glycine 2 carries the N-myristoyl glycine lipid modification. Cysteine 3 carries the S-palmitoyl cysteine lipid modification. One can recognise a Protein kinase domain in the interval tyrosine 57 to isoleucine 324. Residues leucine 63–valine 71 and lysine 86 each bind ATP. Residue serine 65 is modified to Phosphoserine. Serine 117 carries the post-translational modification Phosphoserine. Aspartate 190 (proton acceptor) is an active-site residue. 2 positions are modified to phosphoserine: serine 216 and serine 219. Threonine 230 carries the phosphothreonine modification. The residue at position 334 (serine 334) is a Phosphoserine. Residues asparagine 345 to serine 352 carry the J domain autoinhibitory motif motif. Residues asparagine 345–isoleucine 363 form a j domain region. Positions glutamine 353–isoleucine 363 match the J domain interacts with the EF-hand domains motif. 4 consecutive EF-hand domains span residues glutamate 371–phenylalanine 406, asparagine 415–leucine 450, phenylalanine 451–phenylalanine 486, and valine 497–asparagine 532. Ca(2+) is bound by residues aspartate 384, asparagine 386, aspartate 388, glutamine 390, glutamate 395, aspartate 428, aspartate 430, asparagine 432, tyrosine 434, glutamate 439, aspartate 464, aspartate 466, serine 468, lysine 470, glutamate 475, aspartate 510, asparagine 512, aspartate 514, methionine 516, and glutamate 521.

The protein belongs to the protein kinase superfamily. Ser/Thr protein kinase family. CDPK subfamily. Monomer. The cofactor is Mg(2+). In terms of processing, myristoylated. Myristoylation and palmitoylation are required for the localization to the parasitophorous vacuole membrane. Palmitoylated. Palmitoylation increases in merozoites in response to low level of extracellular K(+) in the host blood. Myristoylation and palmitoylation are required for the localization to the parasitophorous vacuole membrane. Post-translationally, phosphorylation at Thr-230 may regulate CDPK1 kinase activity. Phosphorylation increases in response to an increase in intracellular Ca(2+) levels. Autophosphorylated in vitro. Autophosphorylation does not affect membrane localization in vitro.

Its subcellular location is the membrane. The protein localises to the cell membrane. The protein resides in the parasitophorous vacuole membrane. It is found in the cytoplasm. It localises to the cell projection. Its subcellular location is the cilium. The protein localises to the flagellum. The protein resides in the host cell membrane. The enzyme catalyses L-seryl-[protein] + ATP = O-phospho-L-seryl-[protein] + ADP + H(+). The catalysed reaction is L-threonyl-[protein] + ATP = O-phospho-L-threonyl-[protein] + ADP + H(+). Activated by calcium. Upon calcium binding to the EF-hand domains, the C-terminus of the junction domain (J domain) undergoes a conformational change which results in the dissociation of the pseudo-substrate inhibitory motif from the catalytic domain. This, in turn may facilitate the autophosphorylation of the activation loop at Thr-230, which leads to the kinase activation. Calcium-dependent protein kinase which acts as a sensor and effector of intracellular Ca(2+) levels probably in part downstream of cGMP-activated PKG kinase. During the liver stage, involved in sporozoite motility and thus in sporozoite invasion of host hepatocytes, probably together with CDPK4 and CDPK5. In the mosquito midgut and during the last stage of male gamete exflagellation, may play a role in the rupture of the host erythrocyte membrane. In the mosquito midgut, required for the differentiation of the zygote into the ookinete by promoting the translational activation of a subset of repressed mRNAs; these mRNAs are kept repressed in the zygote by the DOZI- or CITH-containing mRNP complexes. Dispensable during the asexual blood stage. This chain is Calcium-dependent protein kinase 1, found in Plasmodium yoelii yoelii.